The following is a 199-amino-acid chain: Recombination protein RecR (199 aa).

Residues 56–71 (CAVCGNIAEETQCRIC) form a C4-type zinc finger. Residues 79–174 (TVICVVEEPK…KVTRLASGLP (96 aa)) form the Toprim domain.

This sequence belongs to the RecR family.

May play a role in DNA repair. It seems to be involved in an RecBC-independent recombinational process of DNA repair. It may act with RecF and RecO. In Thermobifida fusca (strain YX), this protein is Recombination protein RecR.